Consider the following 706-residue polypeptide: Polyribonucleotide nucleotidyltransferase (706 aa).

Mg(2+) is bound by residues D487 and D493. Residues 553–612 form the KH domain; sequence PRLFTMKISQDKIRDVIGKGGETIRSITAETGTEINIAEDGTITIAATTQEAGDAAKKRI. In terms of domain architecture, S1 motif spans 622–692; that stretch reads GKVYEGTVVK…DRGRVRLSIK (71 aa).

This sequence belongs to the polyribonucleotide nucleotidyltransferase family. Requires Mg(2+) as cofactor.

Its subcellular location is the cytoplasm. The enzyme catalyses RNA(n+1) + phosphate = RNA(n) + a ribonucleoside 5'-diphosphate. Its function is as follows. Involved in mRNA degradation. Catalyzes the phosphorolysis of single-stranded polyribonucleotides processively in the 3'- to 5'-direction. The polypeptide is Polyribonucleotide nucleotidyltransferase (Neisseria gonorrhoeae (strain ATCC 700825 / FA 1090)).